The chain runs to 160 residues: MTIAVYPGSFDPVTNGHLDIAARASRIFDTVIMAVFDRPNKQLLFSTEERVALLRESTRHLPRVKVDTYSTLTVDYVRSVGASVIVRGMRAVGDFEAEFQLAQINQTLAPDIDIVLFMASHRYTFFSSSTVREIASLGGDVSWLVPGPVVEALKRAYGRR.

Residue Ser9 coordinates substrate. ATP is bound by residues 9–10 and His17; that span reads SF. Substrate is bound by residues Lys41, Thr73, and Arg87. ATP is bound by residues 88–90, Glu98, and 123–129; these read GMR and YTFFSSS.

Belongs to the bacterial CoaD family. As to quaternary structure, homohexamer. Requires Mg(2+) as cofactor.

The protein resides in the cytoplasm. It catalyses the reaction (R)-4'-phosphopantetheine + ATP + H(+) = 3'-dephospho-CoA + diphosphate. It functions in the pathway cofactor biosynthesis; coenzyme A biosynthesis; CoA from (R)-pantothenate: step 4/5. Functionally, reversibly transfers an adenylyl group from ATP to 4'-phosphopantetheine, yielding dephospho-CoA (dPCoA) and pyrophosphate. The chain is Phosphopantetheine adenylyltransferase from Roseiflexus sp. (strain RS-1).